We begin with the raw amino-acid sequence, 226 residues long: N-(5'-phosphoribosyl)anthranilate isomerase (226 aa).

This sequence belongs to the TrpF family.

It carries out the reaction N-(5-phospho-beta-D-ribosyl)anthranilate = 1-(2-carboxyphenylamino)-1-deoxy-D-ribulose 5-phosphate. The protein operates within amino-acid biosynthesis; L-tryptophan biosynthesis; L-tryptophan from chorismate: step 3/5. This chain is N-(5'-phosphoribosyl)anthranilate isomerase (TRP1), found in Saccharomyces kudriavzevii (strain ATCC MYA-4449 / AS 2.2408 / CBS 8840 / NBRC 1802 / NCYC 2889) (Yeast).